The following is a 304-amino-acid chain: N-carbamoyl-D-amino acid hydrolase (304 aa).

One can recognise a CN hydrolase domain in the interval 5–276 (MILAVGQQGP…DEVITAAVDL (272 aa)). Catalysis depends on residues E47, K127, and C172.

The enzyme catalyses an N-carbamoyl-D-amino acid + H2O + 2 H(+) = a D-alpha-amino acid + NH4(+) + CO2. Functionally, the enzyme catalyzes the hydrolysis of N-carbamoyl-D-amino acids to the corresponding which are useful intermediates in the preparation of beta-lactam antibiotics. Industrial production of beta-lactam antibiotics is now being developed using this enzyme. This chain is N-carbamoyl-D-amino acid hydrolase, found in Agrobacterium sp. (strain KNK712).